The chain runs to 402 residues: Bone morphogenetic protein 8A (402 aa).

The first 19 residues, M1–G19, serve as a signal peptide directing secretion. A propeptide spanning residues G20–R263 is cleaved from the precursor. Residues N158 and N343 are each glycosylated (N-linked (GlcNAc...) asparagine). Intrachain disulfides connect C301–C367, C330–C399, and C334–C401.

Belongs to the TGF-beta family. Homodimer; disulfide-linked.

Its subcellular location is the secreted. In terms of biological role, induces cartilage and bone formation. May be the osteoinductive factor responsible for the phenomenon of epithelial osteogenesis. Plays a role in calcium regulation and bone homeostasis. Signaling protein involved in regulation of thermogenesis and energy balance. Proposed to increase the peripheral response of brown adipose tissue (BAT) to adrenergic stimulation while acting centrally in the hypothalamus to increase sympathetic output to BAT. Its function is as follows. Growth factor of the TGF-beta superfamily that plays important role in various biological processes, including spermatogenesis, osteogenesis, steroidogenesis as well as regulation of energy balance. Initiates the canonical BMP signaling cascade by associating with type I receptor BMPR1A and type II receptor BMPR2. Once all three components are bound together in a complex at the cell surface, BMPR2 phosphorylates and activates BMPR1A. In turn, BMPR1A propagates signal by phosphorylating SMAD1/5/8 that travel to the nucleus and act as activators and repressors of transcription of target genes. In addition, activates the SMAD2/3 pathway. This is Bone morphogenetic protein 8A (BMP8A) from Homo sapiens (Human).